A 146-amino-acid polypeptide reads, in one-letter code: Histone H2B (146 aa).

The segment covering 1–16 (MAPRADKKPAEKKPGA) has biased composition (basic and acidic residues). Residues 1 to 52 (MAPRADKKPAEKKPGAEKTPVAEKAPAEKKPRAGKKLPRDAGAAGDKKKKRA) are disordered. N6-acetyllysine is present on residues Lys7, Lys35, and Lys36. Lys142 participates in a covalent cross-link: Glycyl lysine isopeptide (Lys-Gly) (interchain with G-Cter in ubiquitin).

It belongs to the histone H2B family. The nucleosome is a histone octamer containing two molecules each of H2A, H2B, H3 and H4 assembled in one H3-H4 heterotetramer and two H2A-H2B heterodimers. The octamer wraps approximately 147 bp of DNA. Can be acetylated to form H2BK6ac, H2BK33ac and H2BK34ac. Post-translationally, monoubiquitinated to form H2BK143ub1; may give a specific tag for epigenetic transcriptional activation.

The protein localises to the nucleus. It localises to the chromosome. Functionally, core component of nucleosome. Nucleosomes wrap and compact DNA into chromatin, limiting DNA accessibility to the cellular machineries which require DNA as a template. Histones thereby play a central role in transcription regulation, DNA repair, DNA replication and chromosomal stability. DNA accessibility is regulated via a complex set of post-translational modifications of histones, also called histone code, and nucleosome remodeling. This chain is Histone H2B (HIS2B), found in Nicotiana tabacum (Common tobacco).